A 104-amino-acid polypeptide reads, in one-letter code: MLKPSIDTLLDKVPSKYSLVILQAKRAHELEAGATPTQEFKSVKSTLQALEEIESGNVVIHPDPSAKREAVRAKIEAERLAKEEEERKIKEQIAKEKEEEGEKI.

The protein belongs to the RNA polymerase subunit omega family. In terms of assembly, the RNAP catalytic core consists of 2 alpha, 1 beta, 1 beta' and 1 omega subunit. When a sigma factor is associated with the core the holoenzyme is formed, which can initiate transcription.

It catalyses the reaction RNA(n) + a ribonucleoside 5'-triphosphate = RNA(n+1) + diphosphate. Promotes RNA polymerase assembly. Latches the N- and C-terminal regions of the beta' subunit thereby facilitating its interaction with the beta and alpha subunits. The sequence is that of DNA-directed RNA polymerase subunit omega (rpoZ) from Streptococcus pyogenes serotype M1.